A 76-amino-acid chain; its full sequence is Alpha/kappa-conotoxin-like fe14.1 (76 aa).

The first 24 residues, 1 to 24 (MPSVRSVTCCCLLWMMLSVQLVTP), serve as a signal peptide directing secretion. Positions 25-39 (GSPGTAQLSGHRTAR) are excised as a propeptide. Intrachain disulfides connect C46–C61 and C50–C63. R64 is modified (arginine amide). A propeptide spanning residues 65 to 76 (GKRDVVSSSMAV) is cleaved from the precursor.

The protein belongs to the conotoxin J superfamily. As to expression, expressed by the venom duct.

Its subcellular location is the secreted. In terms of biological role, highly inhibits both nicotinic acetylcholine receptors (neuronal (alpha-3/beta-4) and muscular (alpha-1/beta-1/epsilon/delta) subtypes) and the voltage-gated potassium channel Kv1.6/KCNA6 subtype. This chain is Alpha/kappa-conotoxin-like fe14.1, found in Conus ferrugineus (Cone snail).